The chain runs to 313 residues: Protein FixB (313 aa).

FAD is bound at residue 255 to 283; that stretch reads LYLAVGISGQIQHMVGANASQTIFAINKD.

This sequence belongs to the ETF alpha-subunit/FixB family. In terms of assembly, heterodimer of FixA and FixB.

It participates in amine and polyamine metabolism; carnitine metabolism. Functionally, required for anaerobic carnitine reduction. May bring reductant to CaiA. This is Protein FixB from Escherichia coli O139:H28 (strain E24377A / ETEC).